Here is a 336-residue protein sequence, read N- to C-terminus: Alcohol dehydrogenase, propanol-preferring (336 aa).

Residues C37, H58, C89, C92, C95, C103, and C145 each contribute to the Zn(2+) site.

The protein belongs to the zinc-containing alcohol dehydrogenase family. Zn(2+) is required as a cofactor.

The enzyme catalyses a primary alcohol + NAD(+) = an aldehyde + NADH + H(+). The catalysed reaction is a secondary alcohol + NAD(+) = a ketone + NADH + H(+). Functionally, preferred specificity is towards 1-propanol. In Escherichia coli (strain K12), this protein is Alcohol dehydrogenase, propanol-preferring (adhP).